We begin with the raw amino-acid sequence, 90 residues long: Probable Fe(2+)-trafficking protein (90 aa).

This sequence belongs to the Fe(2+)-trafficking protein family.

Functionally, could be a mediator in iron transactions between iron acquisition and iron-requiring processes, such as synthesis and/or repair of Fe-S clusters in biosynthetic enzymes. This Azotobacter vinelandii (strain DJ / ATCC BAA-1303) protein is Probable Fe(2+)-trafficking protein.